The sequence spans 334 residues: Fructose-1,6-bisphosphatase class 1 (334 aa).

Mg(2+)-binding residues include Glu-90, Asp-113, Leu-115, and Asp-116. Residues 116–119 (DGSS), Asn-209, Tyr-242, and Lys-272 contribute to the substrate site. Position 278 (Glu-278) interacts with Mg(2+).

Belongs to the FBPase class 1 family. In terms of assembly, homotetramer. It depends on Mg(2+) as a cofactor.

The protein localises to the cytoplasm. It carries out the reaction beta-D-fructose 1,6-bisphosphate + H2O = beta-D-fructose 6-phosphate + phosphate. The protein operates within carbohydrate biosynthesis; gluconeogenesis. This Haemophilus ducreyi (strain 35000HP / ATCC 700724) protein is Fructose-1,6-bisphosphatase class 1.